The chain runs to 262 residues: Acyl-[acyl-carrier-protein]--UDP-N-acetylglucosamine O-acyltransferase (262 aa).

It belongs to the transferase hexapeptide repeat family. LpxA subfamily. As to quaternary structure, homotrimer.

It localises to the cytoplasm. It carries out the reaction a (3R)-hydroxyacyl-[ACP] + UDP-N-acetyl-alpha-D-glucosamine = a UDP-3-O-[(3R)-3-hydroxyacyl]-N-acetyl-alpha-D-glucosamine + holo-[ACP]. It participates in glycolipid biosynthesis; lipid IV(A) biosynthesis; lipid IV(A) from (3R)-3-hydroxytetradecanoyl-[acyl-carrier-protein] and UDP-N-acetyl-alpha-D-glucosamine: step 1/6. Involved in the biosynthesis of lipid A, a phosphorylated glycolipid that anchors the lipopolysaccharide to the outer membrane of the cell. The chain is Acyl-[acyl-carrier-protein]--UDP-N-acetylglucosamine O-acyltransferase from Shigella flexneri serotype 5b (strain 8401).